The primary structure comprises 216 residues: Small ribosomal subunit protein uS3c (216 aa).

One can recognise a KH type-2 domain in the interval 43–118; sequence IKNYIQKNIR…KLNIAIVKIT (76 aa).

Belongs to the universal ribosomal protein uS3 family. Part of the 30S ribosomal subunit.

The protein localises to the plastid. It localises to the chloroplast. The chain is Small ribosomal subunit protein uS3c (rps3) from Phaseolus vulgaris (Kidney bean).